Here is a 306-residue protein sequence, read N- to C-terminus: Acetyl-coenzyme A carboxylase carboxyl transferase subunit beta (306 aa).

The region spanning 27–296 (LWHKCPSCEA…PEFVAAPVEP (270 aa)) is the CoA carboxyltransferase N-terminal domain. Zn(2+) contacts are provided by cysteine 31, cysteine 34, cysteine 50, and cysteine 53. A C4-type zinc finger spans residues 31–53 (CPSCEAVLYRPELEKTLDVCPKC).

It belongs to the AccD/PCCB family. In terms of assembly, acetyl-CoA carboxylase is a heterohexamer composed of biotin carboxyl carrier protein (AccB), biotin carboxylase (AccC) and two subunits each of ACCase subunit alpha (AccA) and ACCase subunit beta (AccD). Requires Zn(2+) as cofactor.

It localises to the cytoplasm. The catalysed reaction is N(6)-carboxybiotinyl-L-lysyl-[protein] + acetyl-CoA = N(6)-biotinyl-L-lysyl-[protein] + malonyl-CoA. The protein operates within lipid metabolism; malonyl-CoA biosynthesis; malonyl-CoA from acetyl-CoA: step 1/1. In terms of biological role, component of the acetyl coenzyme A carboxylase (ACC) complex. Biotin carboxylase (BC) catalyzes the carboxylation of biotin on its carrier protein (BCCP) and then the CO(2) group is transferred by the transcarboxylase to acetyl-CoA to form malonyl-CoA. In Pseudomonas fluorescens (strain ATCC BAA-477 / NRRL B-23932 / Pf-5), this protein is Acetyl-coenzyme A carboxylase carboxyl transferase subunit beta.